Consider the following 941-residue polypeptide: RNA-binding protein 4F (941 aa).

The segment covering 1 to 13 (MDADKQLERQLEK) has biased composition (basic and acidic residues). A disordered region spans residues 1-149 (MDADKQLERQ…DSDNAGGGNQ (149 aa)). Over residues 14-32 (ELDEMPAEDLDDDAYDEYD) the composition is skewed to acidic residues. Residues 42 to 52 (GSPQQGHSESP) are compositionally biased toward polar residues. The residue at position 43 (serine 43) is a Phosphoserine. Residues 55-65 (EEEHKSEELRQ) are compositionally biased toward basic and acidic residues. Acidic residues predominate over residues 87-98 (SSDDEPSVEETE). Residues 111–134 (DSSSSSDDVGVIEGSELESNSEVS) are compositionally biased toward low complexity. Serine 153 is subject to Phosphoserine. Residues 629–713 (RSRIKPNSQS…GPANAEAKES (85 aa)) form a disordered region. The span at 671-680 (EQQQQQQQQQ) shows a compositional bias: low complexity. Serine 713 carries the post-translational modification Phosphoserine. Tyrosine 717 carries the phosphotyrosine modification. Serine 718 carries the post-translational modification Phosphoserine. Residues 724–801 (NKIFVRNLHP…MNISVAISNP (78 aa)) form the RRM domain. Composition is skewed to basic and acidic residues over residues 862-902 (EANG…KGDD), 913-922 (QKGDEKKEEE), and 930-941 (SNDDFRKLFLKD). Positions 862–941 (EANGEEQKGD…DDFRKLFLKD (80 aa)) are disordered.

The protein localises to the cytoplasm. Functionally, may be involved in gene regulation during development. Binds RNA. The protein is RNA-binding protein 4F of Drosophila melanogaster (Fruit fly).